Reading from the N-terminus, the 477-residue chain is Tripartite motif-containing protein 72 (477 aa).

Positions 14, 17, 29, 31, 34, 37, 53, 56, 86, 89, 97, 100, 105, 108, 114, and 117 each coordinate Zn(2+). The RING-type zinc-finger motif lies at 16 to 59 (CPLCLELFRAPVTPECGHTFCQGCLTGAPKNQDQNGSTPCPTCQ). A B box-type zinc finger spans residues 83-124 (VPKGHCLEHLDPLSVYCEQDKELICGVCASLGKHKGHNIITA). Residues 135-232 (LPQQQVILQE…QMDGVLKDVE (98 aa)) are a coiled coil. A B30.2/SPRY domain is found at 272-476 (DEFKFQVWRK…LKIFYPPAEQ (205 aa)).

Belongs to the TRIM/RBCC family. Homodimer. Homooligomer; disulfide-linked. Oligomerizes on the phospholipid membrane. In terms of processing, disulfide bond formation at Cys-244 occurs in case of membrane damage that cause the entry of the oxidized milieu of the extracellular space, resulting in homooligomerization.

It is found in the cell membrane. The protein resides in the sarcolemma. Its subcellular location is the cytoplasmic vesicle membrane. It carries out the reaction S-ubiquitinyl-[E2 ubiquitin-conjugating enzyme]-L-cysteine + [acceptor protein]-L-lysine = [E2 ubiquitin-conjugating enzyme]-L-cysteine + N(6)-ubiquitinyl-[acceptor protein]-L-lysine.. It participates in protein modification; protein ubiquitination. Specifically binds phosphatidylserine. The binding to phospholipids enhances ubiquitination activity. Muscle-specific E3 ubiquitin-protein ligase that plays a central role in cell membrane repair by nucleating the assembly of the repair machinery at injury sites. Acts as a sensor of oxidation: upon membrane damage, entry of extracellular oxidative environment results in disulfide bond formation and homooligomerization at the injury site. This oligomerization acts as a nucleation site for recruitment of TRIM72-containing vesicles to the injury site, leading to membrane patch formation. Probably acts upstream of the Ca(2+)-dependent membrane resealing process. Required for transport of DYSF to sites of cell injury during repair patch formation. Regulates membrane budding and exocytosis. May be involved in the regulation of the mobility of KCNB1-containing endocytic vesicles. The protein is Tripartite motif-containing protein 72 (trim72) of Xenopus tropicalis (Western clawed frog).